The primary structure comprises 138 residues: Putative pre-16S rRNA nuclease (138 aa).

The protein belongs to the YqgF nuclease family.

Its subcellular location is the cytoplasm. In terms of biological role, could be a nuclease involved in processing of the 5'-end of pre-16S rRNA. In Bacteroides thetaiotaomicron (strain ATCC 29148 / DSM 2079 / JCM 5827 / CCUG 10774 / NCTC 10582 / VPI-5482 / E50), this protein is Putative pre-16S rRNA nuclease.